The sequence spans 115 residues: Holo-[acyl-carrier-protein] synthase (115 aa).

2 residues coordinate Mg(2+): aspartate 5 and glutamate 50.

This sequence belongs to the P-Pant transferase superfamily. AcpS family. The cofactor is Mg(2+).

Its subcellular location is the cytoplasm. The catalysed reaction is apo-[ACP] + CoA = holo-[ACP] + adenosine 3',5'-bisphosphate + H(+). Its function is as follows. Transfers the 4'-phosphopantetheine moiety from coenzyme A to a Ser of acyl-carrier-protein. This Campylobacter fetus subsp. fetus (strain 82-40) protein is Holo-[acyl-carrier-protein] synthase.